The sequence spans 329 residues: Cytosolic arginine sensor for mTORC1 subunit 1 (329 aa).

Serine 14 is modified (phosphoserine; by PKB/AKT1). ACT domains lie at 72 to 138 (AEAT…HTLA) and 260 to 321 (GELW…EVLQ). L-arginine is bound by residues 111-112 (SV), glycine 274, 280-281 (IV), and 300-304 (TFNFD).

Belongs to the GATS family. As to quaternary structure, forms homodimers and heterodimers with CASTOR2. Interacts with the GATOR2 complex which is composed of MIOS, SEC13, SEH1L, WDR24 and WDR59; the interaction is negatively regulated by arginine. Interacts with TM4SF5; the interaction is positively regulated by leucine and is negatively regulated by arginine. In terms of processing, phosphorylation at Ser-14 by AKT1, promoting the interaction between CASTOR1 and RNF167. Post-translationally, ubiquitinated by RNF167 via 'Lys-29'-polyubiquitination, leading to its degradation, releasing the GATOR2 complex. Ubiquitination by RNF167 is promoted by phosphorylation at Ser-14 by AKT1. As to expression, widely expressed.

It is found in the cytoplasm. The protein resides in the cytosol. Its function is as follows. Functions as an intracellular arginine sensor within the amino acid-sensing branch of the TORC1 signaling pathway. As a homodimer or a heterodimer with CASTOR2, binds and inhibits the GATOR subcomplex GATOR2 and thereby mTORC1. Binding of arginine to CASTOR1 allosterically disrupts the interaction of CASTOR1-containing dimers with GATOR2 which can in turn activate mTORC1 and the TORC1 signaling pathway. The sequence is that of Cytosolic arginine sensor for mTORC1 subunit 1 from Homo sapiens (Human).